The primary structure comprises 160 residues: S-adenosylmethionine decarboxylase proenzyme (160 aa).

Serine 73 serves as the catalytic Schiff-base intermediate with substrate; via pyruvic acid. At serine 73 the chain carries Pyruvic acid (Ser); by autocatalysis. Histidine 78 functions as the Proton acceptor; for processing activity in the catalytic mechanism. Residue cysteine 93 is the Proton donor; for catalytic activity of the active site.

The protein belongs to the prokaryotic AdoMetDC family. Type 1 subfamily. In terms of assembly, heterotetramer of two alpha and two beta chains arranged as a dimer of alpha/beta heterodimers. Pyruvate serves as cofactor. Post-translationally, is synthesized initially as an inactive proenzyme. Formation of the active enzyme involves a self-maturation process in which the active site pyruvoyl group is generated from an internal serine residue via an autocatalytic post-translational modification. Two non-identical subunits are generated from the proenzyme in this reaction, and the pyruvate is formed at the N-terminus of the alpha chain, which is derived from the carboxyl end of the proenzyme. The post-translation cleavage follows an unusual pathway, termed non-hydrolytic serinolysis, in which the side chain hydroxyl group of the serine supplies its oxygen atom to form the C-terminus of the beta chain, while the remainder of the serine residue undergoes an oxidative deamination to produce ammonia and the pyruvoyl group blocking the N-terminus of the alpha chain.

The enzyme catalyses S-adenosyl-L-methionine + H(+) = S-adenosyl 3-(methylsulfanyl)propylamine + CO2. It functions in the pathway amine and polyamine biosynthesis; S-adenosylmethioninamine biosynthesis; S-adenosylmethioninamine from S-adenosyl-L-methionine: step 1/1. Its function is as follows. Catalyzes the decarboxylation of S-adenosylmethionine to S-adenosylmethioninamine (dcAdoMet), the propylamine donor required for the synthesis of the polyamines spermine and spermidine from the diamine putrescine. The polypeptide is S-adenosylmethionine decarboxylase proenzyme (Pseudomonas paraeruginosa (strain DSM 24068 / PA7) (Pseudomonas aeruginosa (strain PA7))).